The sequence spans 369 residues: 4beta-methylsterol monooxygenase (369 aa).

One can recognise a Rieske domain in the interval 29 to 135; that stretch reads WYVVEIDGRL…VKAQWGLIWL (107 aa). The [2Fe-2S] cluster site is built by cysteine 70, histidine 72, cysteine 89, and histidine 92.

Requires [2Fe-2S] cluster as cofactor.

It carries out the reaction a 3beta-hydroxy-4,4-dimethylsteroid + 3 NADH + 3 O2 + 2 H(+) = a 3beta-hydroxy-4alpha-methylsteroid-4beta-carboxylate + 3 NAD(+) + 4 H2O. It catalyses the reaction 4,4-dimethyl-5alpha-cholesta-8,24-dien-3beta-ol + 3 NADH + 3 O2 + 2 H(+) = 4beta-carboxy-4alpha-methyl-5alpha-cholesta-8,24-dien-3beta-ol + 3 NAD(+) + 4 H2O. The enzyme catalyses a 3beta-hydroxy-4,4-dimethylsteroid + NADH + O2 + H(+) = a 3beta-hydroxy-4beta-hydroxymethyl-4alpha-methylsteroid + NAD(+) + H2O. The catalysed reaction is a 3beta-hydroxy-4beta-hydroxymethyl-4alpha-methylsteroid + NADH + O2 + H(+) = a 3beta-hydroxy-4beta-formyl-4alpha-methylsteroid + NAD(+) + 2 H2O. It carries out the reaction a 3beta-hydroxy-4beta-formyl-4alpha-methylsteroid + NADH + O2 = a 3beta-hydroxy-4alpha-methylsteroid-4beta-carboxylate + NAD(+) + H2O. It catalyses the reaction 4,4-dimethyl-5alpha-cholesta-8,24-dien-3beta-ol + NADH + O2 + H(+) = 4beta-hydroxymethyl-4alpha-methylzymosterol + NAD(+) + H2O. The enzyme catalyses 4beta-hydroxymethyl-4alpha-methylzymosterol + NADH + O2 + H(+) = 4beta-formylmethyl-4alpha-methyl-5alpha-cholesta-8,24-dien-3beta-ol + NAD(+) + 2 H2O. The catalysed reaction is 4beta-formylmethyl-4alpha-methyl-5alpha-cholesta-8,24-dien-3beta-ol + NADH + O2 = 4beta-carboxy-4alpha-methyl-5alpha-cholesta-8,24-dien-3beta-ol + NAD(+) + H2O. It participates in steroid biosynthesis; sterol biosynthesis. Its function is as follows. Participates in the biosynthesis of bacterial sterols. Together with SdmB, removes one methyl group from the C-4 position of 4,4-dimethylated steroid molecules. SdmA oxidizes the sterol 4beta-methyl group into first a hydroxyl, then an aldehyde and finally a carboxylic acid group. The protein is 4beta-methylsterol monooxygenase of Methylococcus capsulatus (strain ATCC 33009 / NCIMB 11132 / Bath).